Consider the following 304-residue polypeptide: Bifunctional protein FolD (304 aa).

Residues 167–169 (GRS), serine 192, and isoleucine 233 each bind NADP(+).

Belongs to the tetrahydrofolate dehydrogenase/cyclohydrolase family. As to quaternary structure, homodimer.

The enzyme catalyses (6R)-5,10-methylene-5,6,7,8-tetrahydrofolate + NADP(+) = (6R)-5,10-methenyltetrahydrofolate + NADPH. The catalysed reaction is (6R)-5,10-methenyltetrahydrofolate + H2O = (6R)-10-formyltetrahydrofolate + H(+). It participates in one-carbon metabolism; tetrahydrofolate interconversion. Functionally, catalyzes the oxidation of 5,10-methylenetetrahydrofolate to 5,10-methenyltetrahydrofolate and then the hydrolysis of 5,10-methenyltetrahydrofolate to 10-formyltetrahydrofolate. The chain is Bifunctional protein FolD from Rhodospirillum centenum (strain ATCC 51521 / SW).